The sequence spans 417 residues: MQGPTLAVLGALLAVAVSLPTPAPRVTVYVDPPAYPMPRYNYTERWHTTGPIPSPFADGREQPVEVRYAASAAACDMLALIADPQVGRTLWEAVRRHARAYNATVIWYKIESGCARPLYYMEYTECEPRKHFGYCRYRTPPFWDSFLAGFAYPTDDELGLIMAAPARLVEGQYRRALYIDGTVAYTDFMVWLPAGDCWFSKLDAARGYTFSACFPAREYEQNKVLRLTYLTQYYPQEAHKAIVDYWFMRHGGVVPPYFEESKGYEPPPAADGGSPAPPGDDEAREDEGETEDGAAGREGNGGPPGPEGDGESPTPEANGGAEGEPKPGPSPDADRPEGWPSLEAITHPPPAPATPAAPDAVPVGVGIGIAAAAIACVAAAAAGAYFVYTRRRGAGPLPRKPKKLPAFGNVNYSALPG.

An N-terminal signal peptide occupies residues 1–18; it reads MQGPTLAVLGALLAVAVS. The Virion surface portion of the chain corresponds to 19–360; that stretch reads LPTPAPRVTV…APATPAAPDA (342 aa). Residues Asn-41 and Asn-102 are each glycosylated (N-linked (GlcNAc...) asparagine; by host). 3 disulfide bridges follow: Cys-75–Cys-197, Cys-114–Cys-213, and Cys-126–Cys-135. Positions 259–355 are disordered; the sequence is EESKGYEPPP…THPPPAPATP (97 aa). Residues 279 to 292 show a composition bias toward acidic residues; sequence GDDEAREDEGETED. Residues 361–389 form a helical membrane-spanning segment; the sequence is VPVGVGIGIAAAAIACVAAAAAGAYFVYT. The Intravirion portion of the chain corresponds to 390 to 417; it reads RRRGAGPLPRKPKKLPAFGNVNYSALPG.

The protein belongs to the herpesviridae glycoprotein D family.

Its subcellular location is the virion membrane. Functionally, envelope glycoprotein that binds to host cell entry receptors, promoting the virus entry into host cells. May trigger fusion with host membrane, by recruiting the fusion machinery composed of gB and gH/gL. This is Envelope glycoprotein D (gD) from Bovine herpesvirus 1.2 (strain ST) (BoHV-1).